The sequence spans 2944 residues: Collagen alpha-1(VII) chain (2944 aa).

The signal sequence occupies residues 1–16; it reads MTLRLLVAALCAGILA. The nonhelical region (NC1) stretch occupies residues 17–1253; that stretch reads EAPRVRAQHR…PEPCPVYCPK (1237 aa). The VWFA 1 domain maps to 38–211; the sequence is DIVFLLDGSS…SILRTLLPLV (174 aa). Fibronectin type-III domains lie at 234–329, 330–416, 417–507, 510–597, 600–687, 688–775, 778–866, 869–957, and 958–1051; these read APRD…TALE, GPEL…TDAS, VEQT…PELP, PVTD…EPET, AVPG…DPLG, PVRT…APEP, RVSR…PPEA, ALGT…SPRV, and PSIE…CPRG. N-linked (GlcNAc...) asparagine glycosylation is present at Asn337. Residues 632–651 form a disordered region; that stretch reads STGSGPESSQTLPPDSTATD. An N-linked (GlcNAc...) asparagine glycan is attached at Asn786. The VWFA 2 domain maps to 1054-1229; the sequence is DVVFLPHATQ…PSLDQAVSGL (176 aa). N-linked (GlcNAc...) asparagine glycosylation occurs at Asn1109. 2 short sequence motifs (cell attachment site) span residues 1170–1172 and 1334–1336; these read RGD. Disordered stretches follow at residues 1239–1941, 1963–2782, and 2837–2872; these read TTQP…SVPN, WDES…EKGE, and SHAE…PWDS. Positions 1254-1477 are interrupted collagenous region; sequence GQKGEPGEMG…GPRGPPGAIG (224 aa). A triple-helical region region spans residues 1254 to 2784; that stretch reads GQKGEPGEMG…GPRGEKGEAA (1531 aa). Basic and acidic residues predominate over residues 1336-1346; that stretch reads DPGERGPRGPK. Positions 1355-1365 are enriched in gly residues; sequence VIGGEGPGLPG. The span at 1399 to 1408 shows a compositional bias: basic and acidic residues; sequence KGDKGDRGER. Residues 1429-1440 show a composition bias toward pro residues; it reads PGSPGPQGPVGP. The span at 1574–1583 shows a compositional bias: low complexity; sequence RGPPGLVLPG. Composition is skewed to basic and acidic residues over residues 1630–1642, 1669–1683, and 1715–1733; these read RGRD…KGDE, VGEK…EDGR, and AREK…RGPK. The span at 1786–1802 shows a compositional bias: low complexity; it reads KPGAAGPSGPNGAAGKA. Positions 1852–1877 are enriched in basic and acidic residues; the sequence is EDGRKGEKGDSGASGREGRDGPKGER. The span at 1886–1897 shows a compositional bias: pro residues; sequence QGPPGLPGPVGP. The span at 1898 to 1911 shows a compositional bias: gly residues; it reads PGQGFPGVPGGTGP. Residues 1974 to 1984 show a composition bias toward basic and acidic residues; that stretch reads PERRRGPKGDS. The Cell attachment site motif lies at 2008–2010; sequence RGD. 2 positions are modified to 4-hydroxyproline: Pro2036 and Pro2039. Residues 2046 to 2055 are compositionally biased toward gly residues; it reads GRAGGVGEAG. A compositionally biased stretch (basic and acidic residues) spans 2056–2074; the sequence is RPGERGERGEKGERGEQGR. Over residues 2078 to 2092 the composition is skewed to pro residues; the sequence is PGLPGTPGPPGPPGP. A 4-hydroxyproline mark is found at Pro2084, Pro2087, and Pro2090. The segment covering 2127 to 2143 has biased composition (basic and acidic residues); that stretch reads PKGDRGVPGIKGDRGEP. 4 positions are modified to 4-hydroxyproline: Pro2167, Pro2176, Pro2185, and Pro2188. 2 stretches are compositionally biased toward low complexity: residues 2191–2206 and 2235–2250; these read PGLA…SGLK and SGLV…PGQV. The segment covering 2328–2346 has biased composition (basic and acidic residues); the sequence is AKGDRGLPGPRGEKGEAGR. A compositionally biased stretch (low complexity) spans 2387–2406; that stretch reads VKGDLGLPGLPGAPGVVGFP. The span at 2438 to 2448 shows a compositional bias: pro residues; that stretch reads PLGPPGPPGSV. 2 stretches are compositionally biased toward basic and acidic residues: residues 2471-2486 and 2534-2570; these read RGER…DGRP and AKGD…EPGD. Positions 2553-2555 match the Cell attachment site motif; sequence RGD. Residues 2573 to 2601 show a composition bias toward low complexity; that stretch reads SAGLPGLRGLLGPQGQPGAAGIPGDPGSP. 2 positions are modified to 5-hydroxylysine; alternate: Lys2625 and Lys2631. Lys2625 and Lys2631 each carry an O-linked (Gal...) hydroxylysine; alternate glycan. 4-hydroxyproline occurs at positions 2664, 2667, and 2673. The segment covering 2704-2713 has biased composition (gly residues); it reads GTPGIGGFPG. Positions 2749–2762 are enriched in low complexity; it reads GERVVGAPGVPGAP. The tract at residues 2785-2944 is nonhelical region (NC2); sequence LTEDDIRGFV…QSQGTGTAQD (160 aa). Basic and acidic residues predominate over residues 2837-2847; the sequence is SHAEEEERVPP. The span at 2848-2872 shows a compositional bias: acidic residues; sequence EDDEYSEYSEYSVEEYQDPEAPWDS. One can recognise a BPTI/Kunitz inhibitor domain in the interval 2872–2944; sequence SDDPCSLPLD…QSQGTGTAQD (73 aa). Intrachain disulfides connect Cys2876-Cys2929, Cys2885-Cys2912, and Cys2904-Cys2925.

In terms of assembly, homotrimer. Interacts with MIA3/TANGO1; facilitating its loading into transport carriers and subsequent secretion. In terms of processing, prolines at the third position of the tripeptide repeating unit (G-X-Y) are hydroxylated in some or all of the chains.

It is found in the secreted. Its subcellular location is the extracellular space. The protein resides in the extracellular matrix. It localises to the basement membrane. Functionally, stratified squamous epithelial basement membrane protein that forms anchoring fibrils which may contribute to epithelial basement membrane organization and adherence by interacting with extracellular matrix (ECM) proteins such as type IV collagen. This is Collagen alpha-1(VII) chain (COL7A1) from Homo sapiens (Human).